Reading from the N-terminus, the 541-residue chain is Chaperonin GroEL 1 (541 aa).

ATP-binding positions include 29 to 32 (TLGP), 86 to 90 (DGTTT), Gly-413, 477 to 479 (NAA), and Asp-493.

It belongs to the chaperonin (HSP60) family. Forms a cylinder of 14 subunits composed of two heptameric rings stacked back-to-back. Interacts with the co-chaperonin GroES.

The protein localises to the cytoplasm. The catalysed reaction is ATP + H2O + a folded polypeptide = ADP + phosphate + an unfolded polypeptide.. In terms of biological role, together with its co-chaperonin GroES, plays an essential role in assisting protein folding. The GroEL-GroES system forms a nano-cage that allows encapsulation of the non-native substrate proteins and provides a physical environment optimized to promote and accelerate protein folding. The polypeptide is Chaperonin GroEL 1 (Paenarthrobacter aurescens (strain TC1)).